Reading from the N-terminus, the 366-residue chain is Peroxisomal (S)-2-hydroxy-acid oxidase GLO4 (366 aa).

Positions 1 to 360 (MEDNLPVNVR…TRSHVMTEGD (360 aa)) constitute an FMN hydroxy acid dehydrogenase domain. Tyrosine 27 lines the a 2-oxocarboxylate pocket. FMN-binding positions include 80–82 (PTG), serine 109, 130–132 (QLY), and threonine 158. Residue tyrosine 132 participates in a 2-oxocarboxylate binding. Arginine 167 contributes to the a 2-oxocarboxylate binding site. Residues lysine 231 and serine 253 each coordinate FMN. The Proton acceptor role is filled by histidine 255. Residue arginine 258 coordinates a 2-oxocarboxylate. Residues 286–290 (DGGIR) and 309–310 (GR) each bind FMN. Positions 364 to 366 (SLL) match the Microbody targeting signal motif.

This sequence belongs to the FMN-dependent alpha-hydroxy acid dehydrogenase family. In terms of assembly, homotetramer. Binds to CATB and CATC; these interactions are disturbed by alpha-hydroxy-2-pyridinemethanesulfonic acid (HPMS) and salicylic acid (SA). The cofactor is FMN.

The protein resides in the peroxisome. It carries out the reaction a (2S)-2-hydroxycarboxylate + O2 = a 2-oxocarboxylate + H2O2. The protein operates within lipid metabolism; fatty acid metabolism. Functionally, oxidase that catalyzes the oxidation of a broad range of 2-hydroxyacids to the corresponding 2-oxoacids, with a reduction of O2 to H2O2. May be involved in a general medium- and long-chain fatty acid catabolic pathway such as alpha-oxidation. The chain is Peroxisomal (S)-2-hydroxy-acid oxidase GLO4 (GLO4) from Oryza sativa subsp. japonica (Rice).